The sequence spans 692 residues: DNA repair protein RAD34 (692 aa).

A disordered region spans residues 1 to 38; that stretch reads MAKRLLESSQNDQANRKNSKIEKKEVSFYEEEETDDSF. Positions 28–38 are enriched in acidic residues; the sequence is FYEEEETDDSF.

It belongs to the XPC family.

The protein localises to the nucleus. Its function is as follows. Involved in nucleotide excision repair (NER) of damaged ribosomal DNA (rDNA). Required for the repair of the RNA polymerase I-transcribed strand of rDNA. In Saccharomyces cerevisiae (strain ATCC 204508 / S288c) (Baker's yeast), this protein is DNA repair protein RAD34 (RAD34).